The sequence spans 337 residues: MRLTASEIAAQFGLTVVGDGATEVSGVATLAHAGTGQLSFLANPRYRPQLAETQASVVILRADDAESAQGTALVAKDPYTAFAKIAALFDVAPVRAPGIHASAVIDPTATVSPTAHVGPFVSIGAGSRVGDGCVIGAGSIIGEDCVVDDGCELIARVTLVTRVRLGKRVRVHPGAVLGADGFGLAMDAGHWIKVPQLGGVVIGDDCEIGANTCIDRGALEDTVLEEDVRVDNLVQIAHNCRIGAHSAIAGCTGIAGSAKIGRYCLLGGHVGVVGHLEICDKVVITGKSVVRNSIHEPGEYSSGTPLTDNRTWRKNAARFKQLDALARRILAVGKENQ.

The active-site Proton acceptor is the histidine 238.

It belongs to the transferase hexapeptide repeat family. LpxD subfamily. Homotrimer.

It catalyses the reaction a UDP-3-O-[(3R)-3-hydroxyacyl]-alpha-D-glucosamine + a (3R)-hydroxyacyl-[ACP] = a UDP-2-N,3-O-bis[(3R)-3-hydroxyacyl]-alpha-D-glucosamine + holo-[ACP] + H(+). It functions in the pathway bacterial outer membrane biogenesis; LPS lipid A biosynthesis. Its function is as follows. Catalyzes the N-acylation of UDP-3-O-acylglucosamine using 3-hydroxyacyl-ACP as the acyl donor. Is involved in the biosynthesis of lipid A, a phosphorylated glycolipid that anchors the lipopolysaccharide to the outer membrane of the cell. In Xanthomonas campestris pv. campestris (strain 8004), this protein is UDP-3-O-acylglucosamine N-acyltransferase.